We begin with the raw amino-acid sequence, 461 residues long: Cysteine--tRNA ligase (461 aa).

Cys28 contacts Zn(2+). A 'HIGH' region motif is present at residues 30-40 (ITVYDLCHIGH). Residues Cys209, His234, and Glu238 each contribute to the Zn(2+) site. Residues 266-270 (KMSKS) carry the 'KMSKS' region motif. Lys269 contacts ATP.

This sequence belongs to the class-I aminoacyl-tRNA synthetase family. As to quaternary structure, monomer. Zn(2+) serves as cofactor.

It is found in the cytoplasm. The enzyme catalyses tRNA(Cys) + L-cysteine + ATP = L-cysteinyl-tRNA(Cys) + AMP + diphosphate. In Pectobacterium carotovorum subsp. carotovorum (strain PC1), this protein is Cysteine--tRNA ligase.